A 667-amino-acid chain; its full sequence is Sterile alpha motif domain-containing protein 15 (667 aa).

Residues 1–18 (MAEVPEDYDSGPDEDGEP) show a composition bias toward acidic residues. Disordered regions lie at residues 1–108 (MAEV…KSER) and 147–424 (SAME…IKSK). Composition is skewed to basic and acidic residues over residues 19–53 (ESER…HEPQ), 84–93 (IAKESKRDVP), 187–196 (ESLRVQHEET), and 228–266 (TKPD…KSSE). The span at 268 to 277 (AGLEPPEETQ) shows a compositional bias: acidic residues. Composition is skewed to basic and acidic residues over residues 284–314 (MQRK…KSTD), 322–338 (EEIK…KPNE), 346–364 (EMMK…EEKN), and 381–422 (PRVE…EPIK). Positions 538–601 (WDPEKVAEWI…SRHTRELLEI (64 aa)) constitute an SAM domain.

This Macaca fascicularis (Crab-eating macaque) protein is Sterile alpha motif domain-containing protein 15 (SAMD15).